A 228-amino-acid polypeptide reads, in one-letter code: Octanoyltransferase (228 aa).

Residues Gly31 to Phe212 form the BPL/LPL catalytic domain. Substrate contacts are provided by residues Arg76–His83, Ala143–Gly145, and Gly156–Ala158. Cys174 (acyl-thioester intermediate) is an active-site residue.

It belongs to the LipB family.

It is found in the cytoplasm. It carries out the reaction octanoyl-[ACP] + L-lysyl-[protein] = N(6)-octanoyl-L-lysyl-[protein] + holo-[ACP] + H(+). It participates in protein modification; protein lipoylation via endogenous pathway; protein N(6)-(lipoyl)lysine from octanoyl-[acyl-carrier-protein]: step 1/2. Functionally, catalyzes the transfer of endogenously produced octanoic acid from octanoyl-acyl-carrier-protein onto the lipoyl domains of lipoate-dependent enzymes. Lipoyl-ACP can also act as a substrate although octanoyl-ACP is likely to be the physiological substrate. The chain is Octanoyltransferase from Thermoanaerobacter pseudethanolicus (strain ATCC 33223 / 39E) (Clostridium thermohydrosulfuricum).